Here is a 938-residue protein sequence, read N- to C-terminus: MSDYKSTLNLPETGFPMRGDLAKREPGMLARWTDDDLYGIIRAAKKGKKTFILHDGPPYANGSIHIGHSVNKILKDIIIKSKGLSGYDSPYVPGWDCHGLPIELKVEQEYGKPGEKFTAAEFRAKCREYAATQVDGQRKDFIRLGVLGDWSHPYLTMDFKTEANIIRALGKIIGNGHLHKGAKPVHWCVDCRSALAEAEVEYYDKTSPSIDVAFQAVDQDALKTKFGVSNVNGPISLVIWTTTPWTLPANRAISIAPDFDYALVQIDGQAVILAKDLVESVMQRIGVSDYTILGTVKGAELELLRFTHPFMDFDVPAILGDHVTLDAGTGAVHTAPGHGPDDYVIGQKYGLETANPVGPDGTYLPGTYPTLDGVNVFKANDIVIALLQEKGALLHVEKMQHSYPCCWRHKTPIIFRATPQWFVSMDQKGLRAQSLKEIKGVQWIPDWGQARIESMVANRPDWCISRQRTWGVPMSLFVHKDTEELHPRTLELMEEVAKRVEVDGIQAWWDLDAKEILGDEADQYVKVPDTLDVWFDSGSTHSSVVDVRPEFAGHAADMYLEGSDQHRGWFMSSLMISTAMKGKAPYRQVLTHGFTVDGQGRKMSKSIGNTVSPQDVMNKLGADILRLWVASTDYTGEMAVSDEILKRAADSYRRIRNTARFLLANLNGFDPAKDMVKPEEMVVLDRWAVGCAKAAQEDILKAYEAYDFHEVVQRLMRFCSVEMGSFYLDIIKDRQYTAKADSVARRSCQTALYHIAEALVRWMAPILSFTADEVWGYLPGEREKYVFTGEWYEGLFGLADSEAMNDAFWDELLKVRGEVNKVIEQARADKNVGGSLEAAVTLYAEPELAAKLTALGDELRFVLLTSGATVADYNDAPADAQQSEVLKGLKVALSKAEGEKCPRCWHYTQDVGKVAEHAEICGRCVSNVAGDGEKRKFA.

The 'HIGH' region motif lies at 58–68 (PYANGSIHIGH). Position 183 is an N6-acetyllysine (Lys-183). Glu-561 contacts L-isoleucyl-5'-AMP. Positions 602–606 (KMSKS) match the 'KMSKS' region motif. Lys-605 serves as a coordination point for ATP. Cys-901, Cys-904, Cys-921, and Cys-924 together coordinate Zn(2+).

The protein belongs to the class-I aminoacyl-tRNA synthetase family. IleS type 1 subfamily. As to quaternary structure, monomer. Zn(2+) serves as cofactor.

The protein resides in the cytoplasm. It carries out the reaction tRNA(Ile) + L-isoleucine + ATP = L-isoleucyl-tRNA(Ile) + AMP + diphosphate. Catalyzes the attachment of isoleucine to tRNA(Ile). As IleRS can inadvertently accommodate and process structurally similar amino acids such as valine, to avoid such errors it has two additional distinct tRNA(Ile)-dependent editing activities. One activity is designated as 'pretransfer' editing and involves the hydrolysis of activated Val-AMP. The other activity is designated 'posttransfer' editing and involves deacylation of mischarged Val-tRNA(Ile). In Escherichia coli O6:K15:H31 (strain 536 / UPEC), this protein is Isoleucine--tRNA ligase.